Here is a 219-residue protein sequence, read N- to C-terminus: Interleukin-12 subunit alpha (219 aa).

A signal peptide spans 1-22; the sequence is MCPARSLLLVATLVLLDHLSLA. Intrachain disulfides connect cysteine 37/cysteine 110, cysteine 64/cysteine 196, and cysteine 85/cysteine 123. N-linked (GlcNAc...) asparagine glycans are attached at residues asparagine 93 and asparagine 107.

The protein belongs to the IL-6 superfamily. As to quaternary structure, heterodimer with IL12B; disulfide-linked. This heterodimer is known as interleukin IL-12. Heterodimer with EBI3/IL27B; not disulfide-linked. This heterodimer is known as interleukin IL-35. Interacts with NBR1; this interaction promotes IL-12 secretion.

The protein resides in the secreted. Heterodimerizes with IL12B to form the IL-12 cytokine or with EBI3/IL27B to form the IL-35 cytokine. IL-12 is primarily produced by professional antigen-presenting cells (APCs) such as B-cells and dendritic cells (DCs) as well as macrophages and granulocytes and regulates T-cell and natural killer-cell responses, induces the production of interferon-gamma (IFN-gamma), favors the differentiation of T-helper 1 (Th1) cells and is an important link between innate resistance and adaptive immunity. Mechanistically, exerts its biological effects through a receptor composed of IL12R1 and IL12R2 subunits. Binding to the receptor results in the rapid tyrosine phosphorylation of a number of cellular substrates including the JAK family kinases TYK2 and JAK2. In turn, recruited STAT4 gets phosphorylated and translocates to the nucleus where it regulates cytokine/growth factor responsive genes. As part of IL-35, plays essential roles in maintaining the immune homeostasis of the liver microenvironment and also functions as an immune-suppressive cytokine. Mediates biological events through unconventional receptors composed of IL12RB2 and gp130/IL6ST heterodimers or homodimers. Signaling requires the transcription factors STAT1 and STAT4, which form a unique heterodimer that binds to distinct DNA sites. This is Interleukin-12 subunit alpha (IL12A) from Homo sapiens (Human).